Here is a 439-residue protein sequence, read N- to C-terminus: MRLSRYFLPILKETPKEAEIVSHRLMLRAGMLRQEAAGIYAWLPLGHRVLKKIEQIVREEQNRAGAIELLMPTLQLADLWRESGRYDAYGPEMLRIADRHKRELLYGPTNEEMITEIFRAYVKSYKSLPLNLYHIQWKFRDEQRPRFGVMRGREFLMKDAYSFDIDEAAARRAYNRMFVAYLRTFARMGLKAIPMRAETGPIGGDLSHEFIVLAETGESAVYCDSEVLNLPVPGEDVDYDGDLTPIIKQWTSVYAATEDVHEAERFDREVPAERKLHTRGIEVGQIFYFGTKYSEAMKALVAGPDGVEVPIHGGSYGVGVSRLLGAIIEACHDENGIKWPEAVAPFRAAILNLKQGAAETDAACEQLYRELIAKGVDVLYDDTDQRAGAKFATADLIGIPWQILVGPKGLADGTVELKRRADGSRENVALAEAVARLTQ.

The protein belongs to the class-II aminoacyl-tRNA synthetase family. ProS type 2 subfamily. In terms of assembly, homodimer.

It localises to the cytoplasm. It catalyses the reaction tRNA(Pro) + L-proline + ATP = L-prolyl-tRNA(Pro) + AMP + diphosphate. Its function is as follows. Catalyzes the attachment of proline to tRNA(Pro) in a two-step reaction: proline is first activated by ATP to form Pro-AMP and then transferred to the acceptor end of tRNA(Pro). The protein is Proline--tRNA ligase of Rhodopseudomonas palustris (strain BisA53).